Here is a 312-residue protein sequence, read N- to C-terminus: Olfactory receptor-like protein COR2 (312 aa).

Topologically, residues 1-26 are extracellular; sequence MASGNCTTPTTFILSGLTDNPRLQMP. N-linked (GlcNAc...) asparagine glycosylation occurs at asparagine 5. Residues 27–49 form a helical membrane-spanning segment; that stretch reads LFMVFLVIYTTTLLTNLGLIALI. The Cytoplasmic segment spans residues 50–57; sequence GMDLHLQT. The chain crosses the membrane as a helical span at residues 58-79; that stretch reads PMYIFLQNLSFTDAAYSTVITP. Residues 80-100 lie on the Extracellular side of the membrane; sequence KMLATFLEERRTISYVGCILQ. The cysteines at positions 97 and 179 are disulfide-linked. A helical transmembrane segment spans residues 101–120; the sequence is YFSFVLLTTSEWLLLAVMAY. Residues 121 to 139 are Cytoplasmic-facing; it reads DRYVAICKPLLYPSIMTKA. A helical membrane pass occupies residues 140–164; it reads VCWRLVKGLYSLAFLNSLVHTSGLL. Residues 165 to 205 are Extracellular-facing; sequence KLSFCSSNVVNHFFCDNRPLFQISSSSTTLNELLVIISGSL. A helical membrane pass occupies residues 206–226; sequence FVMSSIITILISYVFIILTVV. Over 227–239 the chain is Cytoplasmic; that stretch reads MIRSKDGKYKAFS. The chain crosses the membrane as a helical span at residues 240 to 260; sequence TCTSHLMAVSLFHGTVIFMYL. Residues 261 to 271 are Extracellular-facing; that stretch reads RSVKLFSLDTD. The helical transmembrane segment at 272–292 threads the bilayer; it reads KIASLFYTVVIPMLNPLIYSW. Topologically, residues 293-312 are cytoplasmic; sequence RNKEVKDALRRLTATSVWLH.

It belongs to the G-protein coupled receptor 1 family.

It is found in the cell membrane. Functionally, odorant receptor. This Gallus gallus (Chicken) protein is Olfactory receptor-like protein COR2 (COR2).